The chain runs to 89 residues: Small ribosomal subunit protein uS15 (89 aa).

The protein belongs to the universal ribosomal protein uS15 family. As to quaternary structure, part of the 30S ribosomal subunit. Forms a bridge to the 50S subunit in the 70S ribosome, contacting the 23S rRNA.

Functionally, one of the primary rRNA binding proteins, it binds directly to 16S rRNA where it helps nucleate assembly of the platform of the 30S subunit by binding and bridging several RNA helices of the 16S rRNA. Forms an intersubunit bridge (bridge B4) with the 23S rRNA of the 50S subunit in the ribosome. This chain is Small ribosomal subunit protein uS15, found in Bartonella tribocorum (strain CIP 105476 / IBS 506).